A 150-amino-acid polypeptide reads, in one-letter code: MWCFTLDGQQKEIHIDRKLEEMDAPAVDDCYGLAEKNGLIYMLYYGDAVIAAFDETVVRRVWILSDKEPDSEAFDQLAISEEGFLVGTFNCYSADLKSSLYLISADVSQEMEEITCCDSNGEGLDVQQLKLTSYAVYAVASSGVYKQDIQ.

This is an uncharacterized protein from Bacillus subtilis (strain 168).